The following is a 102-amino-acid chain: Integration host factor subunit alpha (102 aa).

Belongs to the bacterial histone-like protein family. As to quaternary structure, heterodimer of an alpha and a beta chain.

Functionally, this protein is one of the two subunits of integration host factor, a specific DNA-binding protein that functions in genetic recombination as well as in transcriptional and translational control. The chain is Integration host factor subunit alpha from Albidiferax ferrireducens (strain ATCC BAA-621 / DSM 15236 / T118) (Rhodoferax ferrireducens).